Reading from the N-terminus, the 204-residue chain is Peptide deformylase (204 aa).

Residues Cys131 and His174 each contribute to the Fe cation site. Residue Glu175 is part of the active site. His178 contacts Fe cation.

The protein belongs to the polypeptide deformylase family. It depends on Fe(2+) as a cofactor.

It carries out the reaction N-terminal N-formyl-L-methionyl-[peptide] + H2O = N-terminal L-methionyl-[peptide] + formate. Removes the formyl group from the N-terminal Met of newly synthesized proteins. Requires at least a dipeptide for an efficient rate of reaction. N-terminal L-methionine is a prerequisite for activity but the enzyme has broad specificity at other positions. The polypeptide is Peptide deformylase (Streptococcus thermophilus (strain CNRZ 1066)).